A 37-amino-acid chain; its full sequence is MKVSASVKRRCAKCRIIRRHGIVRVICENPKHKQRQG.

This sequence belongs to the bacterial ribosomal protein bL36 family.

The protein is Large ribosomal subunit protein bL36 of Thermomicrobium roseum (strain ATCC 27502 / DSM 5159 / P-2).